The chain runs to 453 residues: Cytochrome b-c1 complex subunit 2, mitochondrial (453 aa).

Residues 1 to 14 constitute a mitochondrion transit peptide; that stretch reads MKLLTRAGSLSRFY. An N6-acetyllysine mark is found at Lys-66, Lys-199, and Lys-250.

Belongs to the peptidase M16 family. UQCRC2/QCR2 subfamily. In terms of assembly, component of the ubiquinol-cytochrome c oxidoreductase (cytochrome b-c1 complex, complex III, CIII), a multisubunit enzyme composed of 11 subunits. The complex is composed of 3 respiratory subunits cytochrome b, cytochrome c1 and Rieske protein UQCRFS1, 2 core protein subunits UQCRC1/QCR1 and UQCRC2/QCR2, and 6 low-molecular weight protein subunits UQCRH/QCR6, UQCRB/QCR7, UQCRQ/QCR8, UQCR10/QCR9, UQCR11/QCR10 and subunit 9, the cleavage product of Rieske protein UQCRFS1. The complex exists as an obligatory dimer and forms supercomplexes (SCs) in the inner mitochondrial membrane with NADH-ubiquinone oxidoreductase (complex I, CI) and cytochrome c oxidase (complex IV, CIV), resulting in different assemblies (supercomplex SCI(1)III(2)IV(1) and megacomplex MCI(2)III(2)IV(2)). Interacts with RAB5IF. Interacts with STMP1.

It is found in the mitochondrion inner membrane. In terms of biological role, component of the ubiquinol-cytochrome c oxidoreductase, a multisubunit transmembrane complex that is part of the mitochondrial electron transport chain which drives oxidative phosphorylation. The respiratory chain contains 3 multisubunit complexes succinate dehydrogenase (complex II, CII), ubiquinol-cytochrome c oxidoreductase (cytochrome b-c1 complex, complex III, CIII) and cytochrome c oxidase (complex IV, CIV), that cooperate to transfer electrons derived from NADH and succinate to molecular oxygen, creating an electrochemical gradient over the inner membrane that drives transmembrane transport and the ATP synthase. The cytochrome b-c1 complex catalyzes electron transfer from ubiquinol to cytochrome c, linking this redox reaction to translocation of protons across the mitochondrial inner membrane, with protons being carried across the membrane as hydrogens on the quinol. In the process called Q cycle, 2 protons are consumed from the matrix, 4 protons are released into the intermembrane space and 2 electrons are passed to cytochrome c. The 2 core subunits UQCRC1/QCR1 and UQCRC2/QCR2 are homologous to the 2 mitochondrial-processing peptidase (MPP) subunits beta-MPP and alpha-MPP respectively, and they seem to have preserved their MPP processing properties. May be involved in the in situ processing of UQCRFS1 into the mature Rieske protein and its mitochondrial targeting sequence (MTS)/subunit 9 when incorporated into complex III. The polypeptide is Cytochrome b-c1 complex subunit 2, mitochondrial (UQCRC2) (Bos taurus (Bovine)).